The sequence spans 420 residues: Glutamyl-tRNA reductase (420 aa).

Substrate contacts are provided by residues 49-52 (TCNR), serine 109, 114-116 (EPQ), and glutamine 120. Cysteine 50 serves as the catalytic Nucleophile. 189 to 194 (GAGETI) contacts NADP(+).

It belongs to the glutamyl-tRNA reductase family. Homodimer.

It catalyses the reaction (S)-4-amino-5-oxopentanoate + tRNA(Glu) + NADP(+) = L-glutamyl-tRNA(Glu) + NADPH + H(+). The protein operates within porphyrin-containing compound metabolism; protoporphyrin-IX biosynthesis; 5-aminolevulinate from L-glutamyl-tRNA(Glu): step 1/2. Catalyzes the NADPH-dependent reduction of glutamyl-tRNA(Glu) to glutamate 1-semialdehyde (GSA). The sequence is that of Glutamyl-tRNA reductase from Yersinia pseudotuberculosis serotype O:1b (strain IP 31758).